The primary structure comprises 89 residues: Small ribosomal subunit protein uS15 (89 aa).

This sequence belongs to the universal ribosomal protein uS15 family. As to quaternary structure, part of the 30S ribosomal subunit. Forms a bridge to the 50S subunit in the 70S ribosome, contacting the 23S rRNA.

Functionally, one of the primary rRNA binding proteins, it binds directly to 16S rRNA where it helps nucleate assembly of the platform of the 30S subunit by binding and bridging several RNA helices of the 16S rRNA. Its function is as follows. Forms an intersubunit bridge (bridge B4) with the 23S rRNA of the 50S subunit in the ribosome. The chain is Small ribosomal subunit protein uS15 from Thermobifida fusca (strain YX).